Consider the following 585-residue polypeptide: Glycerol-3-phosphate dehydrogenase 2 (585 aa).

37–65 (DVVVIGGGVVGSGCALDAATRGLKVALVE) contacts FAD.

It belongs to the FAD-dependent glycerol-3-phosphate dehydrogenase family. FAD serves as cofactor.

The protein resides in the cytoplasm. The catalysed reaction is a quinone + sn-glycerol 3-phosphate = dihydroxyacetone phosphate + a quinol. This is Glycerol-3-phosphate dehydrogenase 2 (glpD2) from Mycobacterium bovis (strain ATCC BAA-935 / AF2122/97).